The following is a 274-amino-acid chain: ATP synthase subunit delta (274 aa).

It belongs to the ATPase delta chain family. In terms of assembly, F-type ATPases have 2 components, F(1) - the catalytic core - and F(0) - the membrane proton channel. F(1) has five subunits: alpha(3), beta(3), gamma(1), delta(1), epsilon(1). F(0) has three main subunits: a(1), b(2) and c(10-14). The alpha and beta chains form an alternating ring which encloses part of the gamma chain. F(1) is attached to F(0) by a central stalk formed by the gamma and epsilon chains, while a peripheral stalk is formed by the delta and b chains.

It localises to the cell membrane. In terms of biological role, f(1)F(0) ATP synthase produces ATP from ADP in the presence of a proton or sodium gradient. F-type ATPases consist of two structural domains, F(1) containing the extramembraneous catalytic core and F(0) containing the membrane proton channel, linked together by a central stalk and a peripheral stalk. During catalysis, ATP synthesis in the catalytic domain of F(1) is coupled via a rotary mechanism of the central stalk subunits to proton translocation. This protein is part of the stalk that links CF(0) to CF(1). It either transmits conformational changes from CF(0) to CF(1) or is implicated in proton conduction. The protein is ATP synthase subunit delta of Corynebacterium efficiens (strain DSM 44549 / YS-314 / AJ 12310 / JCM 11189 / NBRC 100395).